Consider the following 283-residue polypeptide: NAD kinase (283 aa).

Asp66 functions as the Proton acceptor in the catalytic mechanism. Residues 66–67 (DG), 140–141 (ND), Arg151, Arg168, Asp170, and Gln240 contribute to the NAD(+) site.

This sequence belongs to the NAD kinase family. Requires a divalent metal cation as cofactor.

It is found in the cytoplasm. The catalysed reaction is NAD(+) + ATP = ADP + NADP(+) + H(+). Involved in the regulation of the intracellular balance of NAD and NADP, and is a key enzyme in the biosynthesis of NADP. Catalyzes specifically the phosphorylation on 2'-hydroxyl of the adenosine moiety of NAD to yield NADP. This is NAD kinase from Syntrophobacter fumaroxidans (strain DSM 10017 / MPOB).